The primary structure comprises 86 residues: UPF0335 protein mll3968 (86 aa).

The protein belongs to the UPF0335 family.

In Mesorhizobium japonicum (strain LMG 29417 / CECT 9101 / MAFF 303099) (Mesorhizobium loti (strain MAFF 303099)), this protein is UPF0335 protein mll3968.